The sequence spans 361 residues: tRNA N6-adenosine threonylcarbamoyltransferase (361 aa).

2 residues coordinate Fe cation: H110 and H114. Substrate contacts are provided by residues 132–136, D165, G178, D182, and N289; that span reads LVSGG. Fe cation is bound at residue D317.

The protein belongs to the KAE1 / TsaD family. The cofactor is Fe(2+).

Its subcellular location is the cytoplasm. The catalysed reaction is L-threonylcarbamoyladenylate + adenosine(37) in tRNA = N(6)-L-threonylcarbamoyladenosine(37) in tRNA + AMP + H(+). Required for the formation of a threonylcarbamoyl group on adenosine at position 37 (t(6)A37) in tRNAs that read codons beginning with adenine. Is involved in the transfer of the threonylcarbamoyl moiety of threonylcarbamoyl-AMP (TC-AMP) to the N6 group of A37, together with TsaE and TsaB. TsaD likely plays a direct catalytic role in this reaction. The protein is tRNA N6-adenosine threonylcarbamoyltransferase of Nitratidesulfovibrio vulgaris (strain ATCC 29579 / DSM 644 / CCUG 34227 / NCIMB 8303 / VKM B-1760 / Hildenborough) (Desulfovibrio vulgaris).